A 167-amino-acid polypeptide reads, in one-letter code: Ubiquitin-fold modifier-conjugating enzyme 1 (167 aa).

C116 serves as the catalytic Glycyl thioester intermediate.

The protein belongs to the ubiquitin-conjugating enzyme family. UFC1 subfamily. In terms of assembly, interacts with UBA5 (via C-terminus). Interacts with UFL1. Interacts with UFM1.

Its function is as follows. E2-like enzyme which specifically catalyzes the second step in ufmylation. Accepts the ubiquitin-like modifier UFM1 from the E1 enzyme UBA5 and forms an intermediate with UFM1 via a thioester linkage. Ufmylation is involved in various processes, such as ribosome recycling, response to DNA damage, interferon response or reticulophagy (also called ER-phagy). This chain is Ubiquitin-fold modifier-conjugating enzyme 1, found in Salmo salar (Atlantic salmon).